We begin with the raw amino-acid sequence, 265 residues long: Arcelin-1 (265 aa).

The first 21 residues, 1–21 (MASSNLLTLALFLVLLTHANS), serve as a signal peptide directing secretion. 3 N-linked (GlcNAc...) asparagine glycosylation sites follow: Asn-33, Asn-89, and Asn-128. A disulfide bridge connects residues Cys-165 and Cys-201.

It belongs to the leguminous lectin family. As to quaternary structure, homodimer.

Functionally, seed storage. This carbohydrate-binding lectin has toxic effects on an important bean bruchid pest, Z.subfasciatus. Antibiosis properties of legume lectins are proposed to be due to the lysis of epithelial cells of the intestine by binding to the carbohydrate moieties of these proteins. This chain is Arcelin-1 (ARC1), found in Phaseolus vulgaris (Kidney bean).